The sequence spans 307 residues: Putative flagellar export/assembly protein LafU (307 aa).

The chain crosses the membrane as a helical span at residues 32-54; sequence AWKVAFADFTLAMMALFMTLWIV. The segment at 87–108 is disordered; sequence SPSHPPKPATVAAPEETEKKAR. The OmpA-like domain maps to 154 to 272; it reads LRVLIKDDQN…RIEIMVLTKS (119 aa).

The protein belongs to the MotB family.

The protein resides in the cell inner membrane. Its function is as follows. Part of the flagellar gene cluster Flag-2. However, the Flag-2 flagellar system could be inactive in strain 042 due to a frameshift in lfgC. In Escherichia coli O44:H18 (strain 042 / EAEC), this protein is Putative flagellar export/assembly protein LafU.